Here is a 506-residue protein sequence, read N- to C-terminus: AMP phosphorylase (506 aa).

AMP is bound by residues Gly168, 194–199 (SRAITG), and Thr203. Asp256 serves as the catalytic Proton donor. AMP contacts are provided by Ser264 and Lys288.

The protein belongs to the thymidine/pyrimidine-nucleoside phosphorylase family. Type 2 subfamily.

The catalysed reaction is AMP + phosphate = alpha-D-ribose 1,5-bisphosphate + adenine. The enzyme catalyses CMP + phosphate = cytosine + alpha-D-ribose 1,5-bisphosphate. It catalyses the reaction UMP + phosphate = alpha-D-ribose 1,5-bisphosphate + uracil. Its function is as follows. Catalyzes the conversion of AMP and phosphate to adenine and ribose 1,5-bisphosphate (R15P). Exhibits phosphorylase activity toward CMP and UMP in addition to AMP. Functions in an archaeal AMP degradation pathway, together with R15P isomerase and RubisCO. The sequence is that of AMP phosphorylase from Methanococcoides burtonii (strain DSM 6242 / NBRC 107633 / OCM 468 / ACE-M).